Reading from the N-terminus, the 179-residue chain is UPF0227 protein SO_2251 (179 aa).

It belongs to the UPF0227 family.

The chain is UPF0227 protein SO_2251 from Shewanella oneidensis (strain ATCC 700550 / JCM 31522 / CIP 106686 / LMG 19005 / NCIMB 14063 / MR-1).